Here is a 565-residue protein sequence, read N- to C-terminus: Periplasmic trehalase (565 aa).

Residues 1 to 30 (MKSPAPSRPQKMALIPACIFLCFAALSVQA) form the signal peptide. Substrate-binding positions include arginine 152, 159-160 (WD), asparagine 196, 205-207 (RSQ), 277-279 (RPE), and glycine 310. Active-site proton donor/acceptor residues include aspartate 312 and glutamate 496. Glutamate 511 is a substrate binding site. The interval 539-565 (CDNVPATRPLSESTTQPLKQKEAEPTP) is disordered.

This sequence belongs to the glycosyl hydrolase 37 family. In terms of assembly, monomer.

Its subcellular location is the periplasm. It carries out the reaction alpha,alpha-trehalose + H2O = alpha-D-glucose + beta-D-glucose. Its function is as follows. Provides the cells with the ability to utilize trehalose at high osmolarity by splitting it into glucose molecules that can subsequently be taken up by the phosphotransferase-mediated uptake system. The chain is Periplasmic trehalase from Escherichia coli O1:K1 / APEC.